Reading from the N-terminus, the 210-residue chain is Thymidylate kinase (210 aa).

An ATP-binding site is contributed by 10-17; sequence GPEGAGKS.

It belongs to the thymidylate kinase family.

It catalyses the reaction dTMP + ATP = dTDP + ADP. Phosphorylation of dTMP to form dTDP in both de novo and salvage pathways of dTTP synthesis. The sequence is that of Thymidylate kinase from Pseudomonas syringae pv. tomato (strain ATCC BAA-871 / DC3000).